The primary structure comprises 252 residues: Small ribosomal subunit protein uS2 (252 aa).

The interval 231–252 (SVESTAQEQVEETAQEETAVEA) is disordered. The segment covering 239–252 (QVEETAQEETAVEA) has biased composition (acidic residues).

Belongs to the universal ribosomal protein uS2 family.

The chain is Small ribosomal subunit protein uS2 from Acetivibrio thermocellus (strain ATCC 27405 / DSM 1237 / JCM 9322 / NBRC 103400 / NCIMB 10682 / NRRL B-4536 / VPI 7372) (Clostridium thermocellum).